Reading from the N-terminus, the 147-residue chain is Peptide deformylase (147 aa).

Residues cysteine 88 and histidine 130 each coordinate Fe cation. Residue glutamate 131 is part of the active site. Histidine 134 contacts Fe cation.

Belongs to the polypeptide deformylase family. The cofactor is Fe(2+).

The catalysed reaction is N-terminal N-formyl-L-methionyl-[peptide] + H2O = N-terminal L-methionyl-[peptide] + formate. In terms of biological role, removes the formyl group from the N-terminal Met of newly synthesized proteins. Requires at least a dipeptide for an efficient rate of reaction. N-terminal L-methionine is a prerequisite for activity but the enzyme has broad specificity at other positions. The protein is Peptide deformylase of Clostridium botulinum (strain Alaska E43 / Type E3).